The primary structure comprises 445 residues: D-serine transporter DsdX (445 aa).

12 consecutive transmembrane segments (helical) span residues 5–25, 29–49, 57–77, 106–126, 140–160, 178–198, 224–244, 265–285, 302–322, 343–363, 385–405, and 425–445; these read IWVV…IVKF, PFLA…MGPL, SGIG…TILG, VLVG…VLLI, LLKL…VVPP, VIVY…PLFL, TLPS…LMLV, IGNP…VLGI, FGSI…NAIL, ILLA…ATVA, IIAI…DSLF, and TATF…SFII.

The protein belongs to the GntP permease family.

The protein resides in the cell inner membrane. With respect to regulation, uptake of D-serine is inhibited by carbonyl cyanide m-chlorophenylhydrazone (CCCP), and at high concentrations of D-threonine, stimulated by D-cycloserine and not affected by D-alanine or glycine. Protein that allows transport of D-serine across the inner membrane, does not transport D-alanine nor probably glycine. Is probably a H(+) symporter, as CCCP inhibits transport. Transports D-serine more efficiently than CycA. The polypeptide is D-serine transporter DsdX (dsdX) (Escherichia coli O6:H1 (strain CFT073 / ATCC 700928 / UPEC)).